Consider the following 325-residue polypeptide: Centromere protein O (325 aa).

A disordered region spans residues 1–35; that stretch reads MEEERNSDEKENALCGRSLTAASRDGGGRMPAAPL. Residues 55-112 are a coiled coil; the sequence is LEMLEAQAHELGLKQEEKEQQEKKLDRLKARVQELRARRDELRAKVELQEKRLLDKEG.

Belongs to the CENP-O/MCM21 family. Component of the CENPA-HI complex, at least composed of CENPH, CENPI, CENPK, CENPL, CENPM, CENPO and CENPP. Component of a discrete complex composed of at least CENPO, CENPP, CENPQ, CENPR and CENPU.

It is found in the nucleus. The protein resides in the chromosome. Its subcellular location is the centromere. In terms of biological role, component of the CENPA-HI complex, a centromeric complex involved in assembly of kinetochore proteins, mitotic progression and chromosome segregation. Involved in kinetochore assembly and required for recovery from spindle damage. The polypeptide is Centromere protein O (CENPO) (Gallus gallus (Chicken)).